The primary structure comprises 401 residues: Probable aspartic-type endopeptidase TRV_05382 (401 aa).

A signal peptide spans 1–22 (MWHSPFFTAFTLFLGFFTLTLA). N-linked (GlcNAc...) asparagine glycans are attached at residues N80 and N102. One can recognise a Peptidase A1 domain in the interval 94 to 398 (FVNEITIGNN…DHDGPKMGFA (305 aa)). The active site involves D110. N282 carries N-linked (GlcNAc...) asparagine glycosylation. Residue D292 is part of the active site. An N-linked (GlcNAc...) asparagine glycan is attached at N329.

It belongs to the peptidase A1 family.

Its subcellular location is the secreted. Its function is as follows. Probable aspartic-type endopeptidase which contributes to virulence. This is Probable aspartic-type endopeptidase TRV_05382 from Trichophyton verrucosum (strain HKI 0517).